A 660-amino-acid chain; its full sequence is Septation initiation protein sid4 (660 aa).

Disordered stretches follow at residues 79–243 (TKKE…QQHF), 368–396 (STTV…PDTK), and 459–503 (RHTS…PAKN). 3 stretches are compositionally biased toward polar residues: residues 125–138 (SFNS…STPY), 156–176 (SNSP…QSPK), and 222–243 (RPNQ…QQHF). Basic and acidic residues predominate over residues 384–396 (STKDFKEQKPDTK). Composition is skewed to polar residues over residues 459 to 480 (RHTS…ITTK) and 488 to 497 (KENTMLNDGS).

As to quaternary structure, homodimer. Interacts with cdc11, sad1, plo1 and dma1.

Its subcellular location is the cytoplasm. The protein resides in the cytoskeleton. The protein localises to the microtubule organizing center. It localises to the spindle pole body. In terms of biological role, required for activation of the spg1 GTPase signaling cascade which leads to the initiation of septation and the subsequent termination of mitosis. May act as a scaffold at the spindle pole body to which other components of the spg1 signaling cascade attach. The sequence is that of Septation initiation protein sid4 (sid4) from Schizosaccharomyces pombe (strain 972 / ATCC 24843) (Fission yeast).